An 83-amino-acid chain; its full sequence is Exodeoxyribonuclease 7 small subunit (83 aa).

The protein belongs to the XseB family. In terms of assembly, heterooligomer composed of large and small subunits.

Its subcellular location is the cytoplasm. The enzyme catalyses Exonucleolytic cleavage in either 5'- to 3'- or 3'- to 5'-direction to yield nucleoside 5'-phosphates.. Its function is as follows. Bidirectionally degrades single-stranded DNA into large acid-insoluble oligonucleotides, which are then degraded further into small acid-soluble oligonucleotides. This Rhizobium etli (strain ATCC 51251 / DSM 11541 / JCM 21823 / NBRC 15573 / CFN 42) protein is Exodeoxyribonuclease 7 small subunit.